The sequence spans 244 residues: 5-oxoprolinase subunit A (244 aa).

It belongs to the LamB/PxpA family. In terms of assembly, forms a complex composed of PxpA, PxpB and PxpC.

The enzyme catalyses 5-oxo-L-proline + ATP + 2 H2O = L-glutamate + ADP + phosphate + H(+). Functionally, catalyzes the cleavage of 5-oxoproline to form L-glutamate coupled to the hydrolysis of ATP to ADP and inorganic phosphate. The chain is 5-oxoprolinase subunit A from Salmonella arizonae (strain ATCC BAA-731 / CDC346-86 / RSK2980).